The primary structure comprises 288 residues: Large ribosomal subunit protein uL2 (288 aa).

Disordered stretches follow at residues 1–46 (MAIH…RNVY) and 226–288 (MVMN…RGKK). A compositionally biased stretch (gly residues) spans 235–248 (NGGGQGKSKGGGGR). The segment covering 279-288 (HNGRKPRGKK) has biased composition (basic residues).

This sequence belongs to the universal ribosomal protein uL2 family. In terms of assembly, part of the 50S ribosomal subunit. Forms a bridge to the 30S subunit in the 70S ribosome.

Its function is as follows. One of the primary rRNA binding proteins. Required for association of the 30S and 50S subunits to form the 70S ribosome, for tRNA binding and peptide bond formation. It has been suggested to have peptidyltransferase activity; this is somewhat controversial. Makes several contacts with the 16S rRNA in the 70S ribosome. The sequence is that of Large ribosomal subunit protein uL2 from Opitutus terrae (strain DSM 11246 / JCM 15787 / PB90-1).